A 207-amino-acid polypeptide reads, in one-letter code: Cytochrome c biogenesis ATP-binding export protein CcmA (207 aa).

In terms of domain architecture, ABC transporter spans 3–206 (LMAEGLSARR…AKSLEMTGFV (204 aa)). Residue 35-42 (GPNGAGKS) coordinates ATP.

It belongs to the ABC transporter superfamily. CcmA exporter (TC 3.A.1.107) family. The complex is composed of two ATP-binding proteins (CcmA) and two transmembrane proteins (CcmB).

It is found in the cell inner membrane. It catalyses the reaction heme b(in) + ATP + H2O = heme b(out) + ADP + phosphate + H(+). Part of the ABC transporter complex CcmAB involved in the biogenesis of c-type cytochromes; once thought to export heme, this seems not to be the case, but its exact role is uncertain. Responsible for energy coupling to the transport system. The polypeptide is Cytochrome c biogenesis ATP-binding export protein CcmA (Rhizobium meliloti (strain 1021) (Ensifer meliloti)).